A 227-amino-acid chain; its full sequence is Cytochrome c oxidase subunit 2 (227 aa).

The Mitochondrial intermembrane portion of the chain corresponds to 1-14 (MAYPFQLGLQDATS). A helical membrane pass occupies residues 15 to 45 (PIMEELLHFHDHTLMIVFLISSLVLYIISLM). Topologically, residues 46–59 (LTTKLTHTSTMDAQ) are mitochondrial matrix. The chain crosses the membrane as a helical span at residues 60–87 (EVETVWTILPAIILILIALPSLRILYMM). The Mitochondrial intermembrane portion of the chain corresponds to 88–227 (DEINNPSLTV…YFETWSAVMV (140 aa)). The Cu cation site is built by His-161, Cys-196, Glu-198, Cys-200, His-204, and Met-207. Position 198 (Glu-198) interacts with Mg(2+). Tyr-218 is modified (phosphotyrosine).

The protein belongs to the cytochrome c oxidase subunit 2 family. Component of the cytochrome c oxidase (complex IV, CIV), a multisubunit enzyme composed of 14 subunits. The complex is composed of a catalytic core of 3 subunits MT-CO1, MT-CO2 and MT-CO3, encoded in the mitochondrial DNA, and 11 supernumerary subunits COX4I, COX5A, COX5B, COX6A, COX6B, COX6C, COX7A, COX7B, COX7C, COX8 and NDUFA4, which are encoded in the nuclear genome. The complex exists as a monomer or a dimer and forms supercomplexes (SCs) in the inner mitochondrial membrane with NADH-ubiquinone oxidoreductase (complex I, CI) and ubiquinol-cytochrome c oxidoreductase (cytochrome b-c1 complex, complex III, CIII), resulting in different assemblies (supercomplex SCI(1)III(2)IV(1) and megacomplex MCI(2)III(2)IV(2)). Found in a complex with TMEM177, COA6, COX18, COX20, SCO1 and SCO2. Interacts with TMEM177 in a COX20-dependent manner. Interacts with COX20. Interacts with COX16. It depends on Cu cation as a cofactor.

Its subcellular location is the mitochondrion inner membrane. The enzyme catalyses 4 Fe(II)-[cytochrome c] + O2 + 8 H(+)(in) = 4 Fe(III)-[cytochrome c] + 2 H2O + 4 H(+)(out). Its function is as follows. Component of the cytochrome c oxidase, the last enzyme in the mitochondrial electron transport chain which drives oxidative phosphorylation. The respiratory chain contains 3 multisubunit complexes succinate dehydrogenase (complex II, CII), ubiquinol-cytochrome c oxidoreductase (cytochrome b-c1 complex, complex III, CIII) and cytochrome c oxidase (complex IV, CIV), that cooperate to transfer electrons derived from NADH and succinate to molecular oxygen, creating an electrochemical gradient over the inner membrane that drives transmembrane transport and the ATP synthase. Cytochrome c oxidase is the component of the respiratory chain that catalyzes the reduction of oxygen to water. Electrons originating from reduced cytochrome c in the intermembrane space (IMS) are transferred via the dinuclear copper A center (CU(A)) of subunit 2 and heme A of subunit 1 to the active site in subunit 1, a binuclear center (BNC) formed by heme A3 and copper B (CU(B)). The BNC reduces molecular oxygen to 2 water molecules using 4 electrons from cytochrome c in the IMS and 4 protons from the mitochondrial matrix. The chain is Cytochrome c oxidase subunit 2 (MT-CO2) from Lycalopex sechurae (Sechuran desert fox).